Reading from the N-terminus, the 308-residue chain is Probable GTP 3',8-cyclase (308 aa).

The Radical SAM core domain occupies 4-224 (RFGRPLEDLR…QIRKKHFRPR (221 aa)). Residue R13 participates in GTP binding. Residues C20, C24, and C27 each contribute to the [4Fe-4S] cluster site. Residue K60 participates in GTP binding. G64 contacts S-adenosyl-L-methionine. T90 contributes to the GTP binding site. S114 contributes to the S-adenosyl-L-methionine binding site. Residue K151 participates in GTP binding. Residues C245 and C248 each contribute to the [4Fe-4S] cluster site. 250–252 (RIR) is a binding site for GTP. C262 lines the [4Fe-4S] cluster pocket.

It belongs to the radical SAM superfamily. MoaA family. It depends on [4Fe-4S] cluster as a cofactor.

It catalyses the reaction GTP + AH2 + S-adenosyl-L-methionine = (8S)-3',8-cyclo-7,8-dihydroguanosine 5'-triphosphate + 5'-deoxyadenosine + L-methionine + A + H(+). It functions in the pathway cofactor biosynthesis; molybdopterin biosynthesis. In terms of biological role, catalyzes the cyclization of GTP to (8S)-3',8-cyclo-7,8-dihydroguanosine 5'-triphosphate. In Saccharolobus islandicus (strain Y.N.15.51 / Yellowstone #2) (Sulfolobus islandicus), this protein is Probable GTP 3',8-cyclase.